Reading from the N-terminus, the 527-residue chain is Hopanoid C-2 methylase (527 aa).

In terms of domain architecture, B12-binding spans 36 to 148 (VAAFMPPQGL…AKLTHDVTRP (113 aa)). A Radical SAM core domain is found at 173 to 408 (AECSKYLLGS…HDQVVAMWKD (236 aa)). 3 residues coordinate [4Fe-4S] cluster: Cys189, Cys193, and Cys196.

The protein belongs to the radical SAM superfamily. Requires [4Fe-4S] cluster as cofactor.

Functionally, required for methylation of hopanoids at the C-2 position. In Rhodopseudomonas palustris (strain TIE-1), this protein is Hopanoid C-2 methylase.